Here is a 482-residue protein sequence, read N- to C-terminus: Auxin transporter-like protein 4 (482 aa).

Topologically, residues 1-59 (MLSQNQAEEAIVTNMNETEQEGGSSLEEIAEDQSMFNFKSFLWHGGSVWDAWFSCASNQ) are cytoplasmic. A helical membrane pass occupies residues 60–77 (VAQVLLTLPYSFSQLGMV). Over 78-79 (SG) the chain is Extracellular. A helical transmembrane segment spans residues 80-100 (IVFQIFYGLIGSWTAYLISVL). Residues 101 to 135 (YVEYRARKEKENVNFKNHVIQWFEVLDGLLGRYWK) lie on the Cytoplasmic side of the membrane. Residues 136–156 (ALGLAFNCTFLLFGSVIQLIA) form a helical membrane-spanning segment. The Extracellular segment spans residues 157-172 (CASNIYYINDKLDKRT). A helical membrane pass occupies residues 173-193 (WTYIFGACCATTVFIPSFHNY). Over 194 to 196 (RIW) the chain is Cytoplasmic. The chain crosses the membrane as a helical span at residues 197 to 217 (SFLGLGMTTYTAWYMAIAAIV). Residues 218–232 (NGQIENVVHSGPTKL) lie on the Extracellular side of the membrane. Residues 233-253 (VLYFTGATNILYTFGGHAVTV) traverse the membrane as a helical segment. Residues 254–266 (EIMHAMWKPQKFK) lie on the Cytoplasmic side of the membrane. The chain crosses the membrane as a helical span at residues 267–287 (YIYFLATLYVFTLTIPSAVAV). Residues 288-314 (YWAFGDELLNHSNAFSLLPKNGFRDAA) are Extracellular-facing. An N-linked (GlcNAc...) asparagine glycan is attached at Asn297. Residues 315–335 (VILMLIHQFITFGFACTPLYF) traverse the membrane as a helical segment. Residues 336–356 (VWEKVIGMHDTKSICLRALVR) lie on the Cytoplasmic side of the membrane. A helical membrane pass occupies residues 357–377 (LPVVIPIWFLAIIFPFFGPIN). Residue Ser378 is a topological domain, extracellular. Residues 379 to 399 (AVGALLVTFTVYIIPALAHML) traverse the membrane as a helical segment. Over 400–422 (TYRTASARKNAVEKPPSFLPSWT) the chain is Cytoplasmic. The helical transmembrane segment at 423–443 (AVYVLNAFIVVWVLVVGFGFG) threads the bilayer. Topologically, residues 444–482 (GWASMTNFIRQIDTFGLFAKCYQCKPPTPPQAPSPHARH) are extracellular.

This sequence belongs to the amino acid/polyamine transporter 2 family. Amino acid/auxin permease (AAAP) (TC 2.A.18.1) subfamily. Shoots and roots of nodulating plants, at low levels.

The protein resides in the cell membrane. Its function is as follows. Carrier protein involved in proton-driven auxin influx. Mediates the formation of auxin gradient from developing leaves (site of auxin biosynthesis) to tips by contributing to the loading of auxin in vascular tissues and facilitating acropetal (base to tip) auxin transport within inner tissues of the root apex, and basipetal (tip to base) auxin transport within outer tissues of the root apex. May be involved in lateral roots and nodules formation. The sequence is that of Auxin transporter-like protein 4 (LAX4) from Medicago truncatula (Barrel medic).